Reading from the N-terminus, the 470-residue chain is ATP synthase subunit beta (470 aa).

Position 155–162 (155–162 (GGAGVGKT)) interacts with ATP.

The protein belongs to the ATPase alpha/beta chains family. F-type ATPases have 2 components, CF(1) - the catalytic core - and CF(0) - the membrane proton channel. CF(1) has five subunits: alpha(3), beta(3), gamma(1), delta(1), epsilon(1). CF(0) has three main subunits: a(1), b(2) and c(9-12). The alpha and beta chains form an alternating ring which encloses part of the gamma chain. CF(1) is attached to CF(0) by a central stalk formed by the gamma and epsilon chains, while a peripheral stalk is formed by the delta and b chains.

Its subcellular location is the cell membrane. The enzyme catalyses ATP + H2O + 4 H(+)(in) = ADP + phosphate + 5 H(+)(out). Functionally, produces ATP from ADP in the presence of a proton gradient across the membrane. The catalytic sites are hosted primarily by the beta subunits. The chain is ATP synthase subunit beta from Pectinatus frisingensis.